The chain runs to 365 residues: 1-deoxy-D-xylulose 5-phosphate reductoisomerase (365 aa).

The NADPH site is built by threonine 7, glycine 8, serine 9, isoleucine 10, alanine 31, lysine 32, asparagine 33, and asparagine 114. Lysine 115 serves as a coordination point for 1-deoxy-D-xylulose 5-phosphate. Glutamate 116 serves as a coordination point for NADPH. Position 134 (aspartate 134) interacts with Mn(2+). 4 residues coordinate 1-deoxy-D-xylulose 5-phosphate: serine 135, glutamate 136, serine 158, and histidine 181. Glutamate 136 is a binding site for Mn(2+). NADPH is bound at residue glycine 187. 1-deoxy-D-xylulose 5-phosphate contacts are provided by serine 194, asparagine 199, lysine 200, and glutamate 203. Glutamate 203 contributes to the Mn(2+) binding site.

The protein belongs to the DXR family. The cofactor is Mg(2+). Mn(2+) is required as a cofactor.

It catalyses the reaction 2-C-methyl-D-erythritol 4-phosphate + NADP(+) = 1-deoxy-D-xylulose 5-phosphate + NADPH + H(+). It participates in isoprenoid biosynthesis; isopentenyl diphosphate biosynthesis via DXP pathway; isopentenyl diphosphate from 1-deoxy-D-xylulose 5-phosphate: step 1/6. In terms of biological role, catalyzes the NADPH-dependent rearrangement and reduction of 1-deoxy-D-xylulose-5-phosphate (DXP) to 2-C-methyl-D-erythritol 4-phosphate (MEP). The polypeptide is 1-deoxy-D-xylulose 5-phosphate reductoisomerase (Campylobacter curvus (strain 525.92)).